The primary structure comprises 198 residues: tRNA (pseudouridine(54)-N(1))-methyltransferase (198 aa).

S-adenosyl-L-methionine-binding positions include Leu-130, Gly-153, 176–181 (LSPLEL), and Cys-186.

This sequence belongs to the methyltransferase superfamily. TrmY family. As to quaternary structure, homodimer.

It is found in the cytoplasm. It carries out the reaction pseudouridine(54) in tRNA + S-adenosyl-L-methionine = N(1)-methylpseudouridine(54) in tRNA + S-adenosyl-L-homocysteine + H(+). Specifically catalyzes the N1-methylation of pseudouridine at position 54 (Psi54) in tRNAs. This chain is tRNA (pseudouridine(54)-N(1))-methyltransferase, found in Methanococcus maripaludis (strain C7 / ATCC BAA-1331).